We begin with the raw amino-acid sequence, 158 residues long: Ribonuclease H (158 aa).

In terms of domain architecture, RNase H type-1 spans 3 to 144 (ELKLIHIFTD…CDQLARAAAE (142 aa)). Residues Asp-12, Glu-50, Asp-72, and Asp-136 each coordinate Mg(2+).

It belongs to the RNase H family. Monomer. The cofactor is Mg(2+).

It is found in the cytoplasm. It carries out the reaction Endonucleolytic cleavage to 5'-phosphomonoester.. Endonuclease that specifically degrades the RNA of RNA-DNA hybrids. This chain is Ribonuclease H, found in Shewanella sp. (strain MR-4).